Here is a 461-residue protein sequence, read N- to C-terminus: Alcaligin biosynthesis enzyme (461 aa).

Val-9–Pro-15 lines the FAD pocket.

It belongs to the lysine N(6)-hydroxylase/L-ornithine N(5)-oxygenase family. The cofactor is FAD.

The protein operates within siderophore biosynthesis; alcaligin biosynthesis. This is Alcaligin biosynthesis enzyme (alcA) from Bordetella parapertussis (strain 12822 / ATCC BAA-587 / NCTC 13253).